The chain runs to 257 residues: NAD-capped RNA hydrolase NudC (257 aa).

Substrate-binding residues include K27 and R71. Positions 100 and 103 each coordinate Zn(2+). E113 contacts substrate. C118 and C121 together coordinate Zn(2+). Y126 is a binding site for substrate. The region spanning P127–I251 is the Nudix hydrolase domain. The a divalent metal cation site is built by A160, E176, and E180. The Nudix box motif lies at G161–N182. Residue Q194–S201 participates in substrate binding. E221 serves as a coordination point for a divalent metal cation. A243 contributes to the substrate binding site.

The protein belongs to the Nudix hydrolase family. NudC subfamily. As to quaternary structure, homodimer. Mg(2+) serves as cofactor. Requires Mn(2+) as cofactor. Zn(2+) is required as a cofactor.

The catalysed reaction is a 5'-end NAD(+)-phospho-ribonucleoside in mRNA + H2O = a 5'-end phospho-adenosine-phospho-ribonucleoside in mRNA + beta-nicotinamide D-ribonucleotide + 2 H(+). The enzyme catalyses NAD(+) + H2O = beta-nicotinamide D-ribonucleotide + AMP + 2 H(+). It carries out the reaction NADH + H2O = reduced beta-nicotinamide D-ribonucleotide + AMP + 2 H(+). MRNA decapping enzyme that specifically removes the nicotinamide adenine dinucleotide (NAD) cap from a subset of mRNAs by hydrolyzing the diphosphate linkage to produce nicotinamide mononucleotide (NMN) and 5' monophosphate mRNA. The NAD-cap is present at the 5'-end of some mRNAs and stabilizes RNA against 5'-processing. Has preference for mRNAs with a 5'-end purine. Catalyzes the hydrolysis of a broad range of dinucleotide pyrophosphates. This chain is NAD-capped RNA hydrolase NudC, found in Photorhabdus laumondii subsp. laumondii (strain DSM 15139 / CIP 105565 / TT01) (Photorhabdus luminescens subsp. laumondii).